The sequence spans 130 residues: Small ribosomal subunit protein uS9 (130 aa).

This sequence belongs to the universal ribosomal protein uS9 family.

This is Small ribosomal subunit protein uS9 from Delftia acidovorans (strain DSM 14801 / SPH-1).